A 384-amino-acid polypeptide reads, in one-letter code: MTMLNFTYYNPVRLIYGKGSLDEIEKQHLIPEDARIMMTYGGGSIKKNGVYEEVLKHIKPIVEFGGIEPNPSHETCIKAIKIAKENKINFLVAVGGGSIIDATKYIALGMEHTYSDDPYDICLKGGKFKVNPAQAKIGVVLTIPATGSETNCWGVISRHADKLKLPFNNESVFPTWSIVDPCFTMSLPDNQIRNGLVDSFVHCIEQYIGNYHLNPVVEAETEGVMRTIIGVSHKTLENHQDYQARITFCYAATVALNMSLLCGVTLCGGAHAVGHELTSYYGLAHGETLAITTPGVMRFNKEKNAKKLIQMGEQVFGIKNSTPEAAIEATEKWFKSIGMKTRLSEWGKGKEEFETIARKFEGNPAGAHKDIDYKGCLQILNDIY.

It belongs to the iron-containing alcohol dehydrogenase family.

It carries out the reaction a primary alcohol + NADP(+) = an aldehyde + NADPH + H(+). Has NADP-dependent alcohol dehydrogenase activity. The sequence is that of NADP-dependent alcohol dehydrogenase 3 from Entamoeba histolytica (strain ATCC 30459 / HM-1:IMSS / ABRM).